Reading from the N-terminus, the 342-residue chain is Heparan sulfate glucosamine 3-O-sulfotransferase 6 (342 aa).

Over 1-31 (MAGSGGLGGGAGDLQGAGTGQGTALRALRAP) the chain is Cytoplasmic. The chain crosses the membrane as a helical; Signal-anchor for type II membrane protein span at residues 32–49 (LALVVLLLSAYCLFALPG). At 50–342 (RCPPAARAPA…QMTGQDFGWD (293 aa)) the chain is on the lumenal side. The segment at 56–75 (RAPAPVPAPAEPPHTSLRLR) is disordered. Residue 100 to 104 (KGGTR) coordinates 3'-phosphoadenylyl sulfate. Substrate contacts are provided by residues 122-128 (EPHFFDR) and 153-156 (KTPS). 3'-phosphoadenylyl sulfate is bound by residues Arg181 and Ser189. 220–221 (WS) is a substrate binding site. N-linked (GlcNAc...) asparagine glycosylation is present at Asn281. The cysteines at positions 288 and 300 are disulfide-linked. A 3'-phosphoadenylyl sulfate-binding site is contributed by 305-309 (KGRPH).

It belongs to the sulfotransferase 1 family. Expressed in liver and kidney, followed by heart, brain, lung and testis.

The protein resides in the golgi apparatus membrane. The enzyme catalyses alpha-D-glucosaminyl-[heparan sulfate](n) + 3'-phosphoadenylyl sulfate = 3-sulfo-alpha-D-glucosaminyl-[heparan sulfate](n) + adenosine 3',5'-bisphosphate + H(+). In terms of biological role, sulfotransferase that utilizes 3'-phospho-5'-adenylyl sulfate (PAPS) to catalyze the transfer of a sulfo group to heparan sulfate. Unlike 3-OST-1, does not convert non-anticoagulant heparan sulfate to anticoagulant heparan sulfate. The protein is Heparan sulfate glucosamine 3-O-sulfotransferase 6 (Hs3st6) of Mus musculus (Mouse).